We begin with the raw amino-acid sequence, 196 residues long: C-type lectin domain family 3 member A (196 aa).

An N-terminal signal peptide occupies residues Met-1 to Gly-22. 3 cysteine pairs are disulfide-bonded: Cys-68–Cys-78, Cys-95–Cys-191, and Cys-167–Cys-183. The region spanning Val-74–Glu-192 is the C-type lectin domain.

Its subcellular location is the secreted. Its function is as follows. Promotes cell adhesion to laminin and fibronectin. The protein is C-type lectin domain family 3 member A (Clec3a) of Mus musculus (Mouse).